The sequence spans 350 residues: LIM domain-containing protein unc-95 (350 aa).

The segment covering 1 to 37 (MTISPQPSHQQFESYQWTTESRSSQQRHGTGTPSQDG) has biased composition (polar residues). The interval 1-65 (MTISPQPSHQ…ESRNSNKDKV (65 aa)) is disordered. Residues 45–65 (PVERHVARWRSESRNSNKDKV) are compositionally biased toward basic and acidic residues. Residues 83–110 (LTALKNDVEQTTEIIRRKQEQMRMERRQ) are a coiled coil. Disordered regions lie at residues 177–198 (RRGQ…EIEY), 206–225 (PEEQ…METD), and 235–262 (MSEE…SGSP). The LIM zinc-binding domain maps to 268 to 334 (AVCAYCSEEI…HDCFYKLYNG (67 aa)).

Ubiquitinated. Ubiquitination by rnf-5 leads to dissociation from muscle dense bodies during molting and is required for ecdysis. Expressed in the body wall muscles, vulval muscles and the anal muscles. Expressed in the muscle arms of the head muscle cells that form neuromuscular junctions and in the anal depressor muscle.

The protein resides in the cytoplasm. Its subcellular location is the nucleus. It is found in the cell membrane. The protein localises to the myofibril. It localises to the sarcomere. The protein resides in the m line. Its subcellular location is the cell junction. It is found in the focal adhesion. Its function is as follows. Required for the assembly and integrity of muscle dense bodies, which establish the adhesion sites of the muscle cells to the extracellular matrix. Decreased localization of unc-95 to dense bodies and their subsequent dissociation plays an important role in ecdysis during molting. Involved in the organization of the muscle sarcomeric structure and thereby required for locomotion. The protein is LIM domain-containing protein unc-95 of Caenorhabditis elegans.